Here is a 420-residue protein sequence, read N- to C-terminus: Serine hydroxymethyltransferase (420 aa).

Residues Leu121 and 125–127 contribute to the (6S)-5,6,7,8-tetrahydrofolate site; that span reads GHL. N6-(pyridoxal phosphate)lysine is present on Lys229.

This sequence belongs to the SHMT family. As to quaternary structure, homodimer. Pyridoxal 5'-phosphate serves as cofactor.

It localises to the cytoplasm. It catalyses the reaction (6R)-5,10-methylene-5,6,7,8-tetrahydrofolate + glycine + H2O = (6S)-5,6,7,8-tetrahydrofolate + L-serine. It participates in one-carbon metabolism; tetrahydrofolate interconversion. The protein operates within amino-acid biosynthesis; glycine biosynthesis; glycine from L-serine: step 1/1. Its function is as follows. Catalyzes the reversible interconversion of serine and glycine with tetrahydrofolate (THF) serving as the one-carbon carrier. This reaction serves as the major source of one-carbon groups required for the biosynthesis of purines, thymidylate, methionine, and other important biomolecules. Also exhibits THF-independent aldolase activity toward beta-hydroxyamino acids, producing glycine and aldehydes, via a retro-aldol mechanism. This chain is Serine hydroxymethyltransferase, found in Pasteurella multocida (strain Pm70).